Here is a 43-residue protein sequence, read N- to C-terminus: Hainantoxin F5-22.36 (43 aa).

3 cysteine pairs are disulfide-bonded: Cys-1/Cys-19, Cys-8/Cys-24, and Cys-18/Cys-38.

Belongs to the neurotoxin 14 (magi-1) family. 02 (HWTX-XVIc) subfamily. As to expression, expressed by the venom gland.

It localises to the secreted. Functionally, probable ion channel inhibitor. The sequence is that of Hainantoxin F5-22.36 from Cyriopagopus hainanus (Chinese bird spider).